We begin with the raw amino-acid sequence, 509 residues long: Maturase K (509 aa).

Belongs to the intron maturase 2 family. MatK subfamily.

Its subcellular location is the plastid. It is found in the chloroplast. Functionally, usually encoded in the trnK tRNA gene intron. Probably assists in splicing its own and other chloroplast group II introns. This Nymphaea odorata (White water lily) protein is Maturase K.